The following is a 297-amino-acid chain: Pyridoxal 5'-phosphate synthase subunit Pdx1 (297 aa).

Asp-27 contacts D-ribose 5-phosphate. The Schiff-base intermediate with D-ribose 5-phosphate role is filled by Lys-84. Gly-156 is a D-ribose 5-phosphate binding site. Residue Arg-168 participates in D-glyceraldehyde 3-phosphate binding. D-ribose 5-phosphate contacts are provided by residues Gly-217 and 238–239 (GS).

The protein belongs to the PdxS/SNZ family. Homohexamer and homododecamer. In the presence of Pdx2, forms a dodecamer of heterodimers.

The enzyme catalyses aldehydo-D-ribose 5-phosphate + D-glyceraldehyde 3-phosphate + L-glutamine = pyridoxal 5'-phosphate + L-glutamate + phosphate + 3 H2O + H(+). It functions in the pathway cofactor biosynthesis; pyridoxal 5'-phosphate biosynthesis. In terms of biological role, catalyzes the formation of pyridoxal 5'-phosphate from ribose 5-phosphate (RBP), glyceraldehyde 3-phosphate (G3P) and ammonia. The ammonia is provided by Pdx2. Can also use ribulose 5-phosphate and dihydroxyacetone phosphate as substrates, resulting from enzyme-catalyzed isomerization of RBP and G3P, respectively. The chain is Pyridoxal 5'-phosphate synthase subunit Pdx1 from Plasmodium berghei.